A 189-amino-acid polypeptide reads, in one-letter code: GMP synthase [glutamine-hydrolyzing] subunit A (189 aa).

The Glutamine amidotransferase type-1 domain maps to 5 to 189 (KILVVNNYGQ…TNFFEVCDRY (185 aa)). The Nucleophile role is filled by Cys79. Active-site residues include His166 and Glu168.

Heterodimer composed of a glutamine amidotransferase subunit (A) and a GMP-binding subunit (B).

The enzyme catalyses XMP + L-glutamine + ATP + H2O = GMP + L-glutamate + AMP + diphosphate + 2 H(+). It participates in purine metabolism; GMP biosynthesis; GMP from XMP (L-Gln route): step 1/1. Functionally, catalyzes the synthesis of GMP from XMP. The sequence is that of GMP synthase [glutamine-hydrolyzing] subunit A from Methanosarcina acetivorans (strain ATCC 35395 / DSM 2834 / JCM 12185 / C2A).